The primary structure comprises 122 residues: Large ribosomal subunit protein uL14 (122 aa).

Belongs to the universal ribosomal protein uL14 family. In terms of assembly, part of the 50S ribosomal subunit. Forms a cluster with proteins L3 and L19. In the 70S ribosome, L14 and L19 interact and together make contacts with the 16S rRNA in bridges B5 and B8.

Functionally, binds to 23S rRNA. Forms part of two intersubunit bridges in the 70S ribosome. This is Large ribosomal subunit protein uL14 from Albidiferax ferrireducens (strain ATCC BAA-621 / DSM 15236 / T118) (Rhodoferax ferrireducens).